A 369-amino-acid polypeptide reads, in one-letter code: 1-aminocyclopropane-1-carboxylate oxidase homolog 3 (369 aa).

Positions 217–318 constitute a Fe2OG dioxygenase domain; that stretch reads KGLLMLSHYY…VSVACFFTTG (102 aa). Positions 241, 243, and 297 each coordinate Fe cation.

Belongs to the iron/ascorbate-dependent oxidoreductase family. It depends on Fe cation as a cofactor.

This chain is 1-aminocyclopropane-1-carboxylate oxidase homolog 3, found in Arabidopsis thaliana (Mouse-ear cress).